A 304-amino-acid polypeptide reads, in one-letter code: MHLPIFLDTDPGIDDAVAIAAAIFAPELDLQLMTTVAGNVSVEKTTRNALQLLHFWNAEIPLAQGAAVPLVRAPRDAASVHGESGMAGYDFVEHNRKPLGIPAFLAIRDALMRAPEPVTLVAIGPLTNIALLLSQCPECKPYIRRLVIMGGSAGRGNCTPNAEFNIAADPEAAACVFRSGIEIVMSGLDVTNQAILTPDYLATLPELNRTGKMLHALFSHYRSGSMQSGLRMHDLCAIAWLVRPELFTLKPCFVAVETQGEFTSGTTVVDIDGCLGKPANVKVALDLDVKGFQQWVAEVLALAS.

Residue histidine 233 is part of the active site.

This sequence belongs to the IUNH family. RihC subfamily.

In terms of biological role, hydrolyzes both purine and pyrimidine ribonucleosides with a broad-substrate specificity. This chain is Non-specific ribonucleoside hydrolase RihC, found in Shigella boydii serotype 4 (strain Sb227).